Here is a 129-residue protein sequence, read N- to C-terminus: GEL complex subunit OPTI (129 aa).

The Cytoplasmic portion of the chain corresponds to 1 to 44; sequence MSGGRRKEEPPQPQLANGALKVSVWSKVLRSDAAWEDKDEFLDV. The helical transmembrane segment at 45 to 65 threads the bilayer; the sequence is IYWFRQIIAVVLGVIWGVLPL. Position 66 (R66) is a topological domain, lumenal. The chain crosses the membrane as a helical span at residues 67-84; it reads GFLGIAGFCVINAGVLYL. Residues 85–103 lie on the Cytoplasmic side of the membrane; the sequence is YFSNYLQIDEEEYGGTWEL. A helical membrane pass occupies residues 104–127; sequence TKEGFMTSFALFMVIWIIFYTAIH. Over 128–129 the chain is Lumenal; it reads YD.

Belongs to the EMC6 family. As to quaternary structure, component of the GET- and EMC-like (GEL) complex, composed of RAB5IF/OPTI and TMCO1. The GEL complex is part of the multi-pass translocon (MPT) complex, composed of three subcomplexes, the GEL complex (composed of RAB5IF/OPTI and TMCO1), the BOS complex (composed of NCLN/Nicalin, NOMO1 and TMEM147) and the PAT complex (composed of WDR83OS/Asterix and CCDC47). The MPT complex associates with the SEC61 complex. Interacts with NDUFS3, NDUFA4, NDUFV1, NDUFA9 and NDUFS8 of the mitochondrial membrane respiratory chain NADH dehydrogenase (Complex I). Interacts with UQCRC2 of the ubiquinol-cytochrome c reductase complex (Complex III). Interacts with COX5A and COX7C of the cytochrome c oxidase complex (Complex IV).

Its subcellular location is the endoplasmic reticulum membrane. It is found in the mitochondrion inner membrane. Component of the multi-pass translocon (MPT) complex that mediates insertion of multi-pass membrane proteins into the lipid bilayer of membranes. The MPT complex takes over after the SEC61 complex: following membrane insertion of the first few transmembrane segments of proteins by the SEC61 complex, the MPT complex occludes the lateral gate of the SEC61 complex to promote insertion of subsequent transmembrane regions. Within the MPT complex, the GEL subcomplex may mediate insertion of transmembrane regions into the membrane. In addition to its role in multi-pass membrane insertion, RAB5IF/OPTI also acts as an assembly factor for mitochondrial respiratory complexes. The sequence is that of GEL complex subunit OPTI (RAB5IF) from Canis lupus familiaris (Dog).